The sequence spans 192 residues: Adenylate kinase (192 aa).

10 to 15 (GAGKGT) is a binding site for ATP. Residues 30–59 (STGDMLRTAVAQATEVGKRAKAVMDAGQLV) form an NMP region. Residues T31, R36, 57-59 (QLV), 85-88 (GYPR), and Q92 each bind AMP. Residues 126–142 (NRVTETVAAGGTVRSDD) form an LID region. Position 127 (R127) interacts with ATP. Residues R139 and R150 each contribute to the AMP site. Position 178 (A178) interacts with ATP.

It belongs to the adenylate kinase family. In terms of assembly, monomer.

It localises to the cytoplasm. It catalyses the reaction AMP + ATP = 2 ADP. Its pathway is purine metabolism; AMP biosynthesis via salvage pathway; AMP from ADP: step 1/1. Catalyzes the reversible transfer of the terminal phosphate group between ATP and AMP. Plays an important role in cellular energy homeostasis and in adenine nucleotide metabolism. This is Adenylate kinase from Rhizobium meliloti (strain 1021) (Ensifer meliloti).